A 303-amino-acid polypeptide reads, in one-letter code: tRNA-cytidine(32) 2-sulfurtransferase (303 aa).

Residues 45-50 carry the PP-loop motif motif; that stretch reads SGGKDS. Positions 120, 123, and 211 each coordinate [4Fe-4S] cluster.

This sequence belongs to the TtcA family. Homodimer. Requires Mg(2+) as cofactor. The cofactor is [4Fe-4S] cluster.

It is found in the cytoplasm. The catalysed reaction is cytidine(32) in tRNA + S-sulfanyl-L-cysteinyl-[cysteine desulfurase] + AH2 + ATP = 2-thiocytidine(32) in tRNA + L-cysteinyl-[cysteine desulfurase] + A + AMP + diphosphate + H(+). It participates in tRNA modification. Catalyzes the ATP-dependent 2-thiolation of cytidine in position 32 of tRNA, to form 2-thiocytidine (s(2)C32). The sulfur atoms are provided by the cysteine/cysteine desulfurase (IscS) system. The polypeptide is tRNA-cytidine(32) 2-sulfurtransferase (Methylobacillus flagellatus (strain ATCC 51484 / DSM 6875 / VKM B-1610 / KT)).